Consider the following 78-residue polypeptide: Acyl carrier protein (78 aa).

A Carrier domain is found at serine 2–glutamine 77. O-(pantetheine 4'-phosphoryl)serine is present on serine 37.

This sequence belongs to the acyl carrier protein (ACP) family. 4'-phosphopantetheine is transferred from CoA to a specific serine of apo-ACP by AcpS. This modification is essential for activity because fatty acids are bound in thioester linkage to the sulfhydryl of the prosthetic group.

It is found in the cytoplasm. It participates in lipid metabolism; fatty acid biosynthesis. Functionally, carrier of the growing fatty acid chain in fatty acid biosynthesis. This Pseudomonas entomophila (strain L48) protein is Acyl carrier protein.